Reading from the N-terminus, the 94-residue chain is Large ribosomal subunit protein bL25 (94 aa).

This sequence belongs to the bacterial ribosomal protein bL25 family. In terms of assembly, part of the 50S ribosomal subunit; part of the 5S rRNA/L5/L18/L25 subcomplex. Contacts the 5S rRNA. Binds to the 5S rRNA independently of L5 and L18.

Its function is as follows. This is one of the proteins that binds to the 5S RNA in the ribosome where it forms part of the central protuberance. In Photorhabdus laumondii subsp. laumondii (strain DSM 15139 / CIP 105565 / TT01) (Photorhabdus luminescens subsp. laumondii), this protein is Large ribosomal subunit protein bL25.